The following is a 632-amino-acid chain: tRNA uridine 5-carboxymethylaminomethyl modification enzyme MnmG (632 aa).

13 to 18 contacts FAD; the sequence is GGGHAG. 273 to 287 lines the NAD(+) pocket; sequence GPRYCPSIEDKIHRF.

Belongs to the MnmG family. Homodimer. Heterotetramer of two MnmE and two MnmG subunits. It depends on FAD as a cofactor.

It localises to the cytoplasm. NAD-binding protein involved in the addition of a carboxymethylaminomethyl (cmnm) group at the wobble position (U34) of certain tRNAs, forming tRNA-cmnm(5)s(2)U34. This Psychrobacter arcticus (strain DSM 17307 / VKM B-2377 / 273-4) protein is tRNA uridine 5-carboxymethylaminomethyl modification enzyme MnmG.